A 484-amino-acid polypeptide reads, in one-letter code: Zinc metalloproteinase homolog-disintegrin albolatin (484 aa).

Residues 1-20 (MIQVLLVTICLAVFPYQGSS) form the signal peptide. A propeptide spanning residues 21 to 191 (IILESGNVND…KTSQLNLPLL (171 aa)) is cleaved from the precursor. 3 N-linked (GlcNAc...) asparagine glycosylation sites follow: N80, N251, and N301. Residues 194-392 (RCIELVMVAD…WTSYCLYNEP (199 aa)) form the Peptidase M12B domain. 10 disulfide bridges follow: C305/C387, C345/C369, C347/C352, C403/C422, C414/C432, C416/C427, C426/C449, C440/C446, C445/C470, and C458/C477. Residues 400–484 (PPVCGNYYLE…GDCPWIGYYG (85 aa)) form the Disintegrin domain. A Cell attachment site; atypical (KGD) motif is present at residues 462–464 (KGD).

It belongs to the venom metalloproteinase (M12B) family. P-II subfamily. P-IIb sub-subfamily. Homodimer; disulfide-linked (disintegrin). In terms of tissue distribution, expressed by the venom gland.

It is found in the secreted. Its function is as follows. The function of this complete protein has not been studied, but it may be similar to the function of the disintegrin domain. A recombinant protein of this domain (409-484) inhibits collagen-induced human platelet aggregation, without having effect on ADP-induced aggregation. It may act either by blocking the binding of fibrinogen to the platelet receptor GPIIb/GPIIIa (ITGA2B/ITGB3) or by blocking the binding of collagen to the integrin alpha-2/beta-1 complex (ITGA2/ITGB1). This chain is Zinc metalloproteinase homolog-disintegrin albolatin, found in Trimeresurus albolabris (White-lipped pit viper).